The following is a 289-amino-acid chain: MRHIICHGGVITEEMAASLLDQLIEEVLADNLPPPSHFEPPTLHELYDLDVTAPEDPNEEAVSQIFPDSVMLAVQEGIDLLTFPPAPGSPEPPHLSRQPEQPEQRALGPVSMPNLVPEVIDLTCHEAGFPPSDDEDEEGEEFVLDYVEHPGHGCRSCHYHRRNTGDPDIMCSLCYMRTCGMFVYSPVSEPEPEPEPEPEPARPTRRPKMAPAILRRPTSPVSRECNSSTDSCDSGPSNTPPEIHPVVPLCPIKPVAVRVGGRRQAVECIEDLLNEPGQPLDLSCKRPRP.

The segment at 41–49 (PTLHELYDL) is interaction with RB1 in competition with E2F1. Positions 76 to 140 (EGIDLLTFPP…PSDDEDEEGE (65 aa)) are interaction with UBE2I. Positions 82–107 (TFPPAPGSPEPPHLSRQPEQPEQRAL) are disordered. Residues 84–93 (PPAPGSPEPP) show a composition bias toward pro residues. At S89 the chain carries Phosphoserine; by host. A PXLXP motif, interaction with host ZMYND11 motif is present at residues 113–117 (PNLVP). An LXCXE motif, interaction with host RB1 and TMEM173/STING motif is present at residues 122–126 (LTCHE). A zinc finger spans residues 154–174 (CRSCHYHRRNTGDPDIMCSLC). Residues 186-240 (PVSEPEPEPEPEPEPARPTRRPKMAPAILRRPTSPVSRECNSSTDSCDSGPSNTP) are disordered. S219 and S231 each carry phosphoserine; by host. Residues 219–237 (SPVSRECNSSTDSCDSGPS) show a composition bias toward polar residues. The short motif at 258–289 (RVGGRRQAVECIEDLLNEPGQPLDLSCKRPRP) is the Bipartite nuclear localization signal element. A PXDLS motif, CTBP-binding motif is present at residues 279–283 (PLDLS).

This sequence belongs to the adenoviridae E1A protein family. In terms of assembly, interacts with host UBE2I; this interaction interferes with polySUMOylation. Interacts with host RB1; this interaction induces the aberrant dissociation of RB1-E2F1 complex thereby disrupting the activity of RB1 and activating E2F1-regulated genes. Interacts with host ATF7; the interaction enhances ATF7-mediated viral transactivation activity which requires the zinc binding domains of both proteins. Isoform early E1A 32 kDa protein and isoform early E1A 26 kDa protein interact (via N-terminus) with CUL1 and E3 ubiquitin ligase RBX1; these interactions inhibit RBX1-CUL1-dependent elongation reaction of ubiquitin chains and attenuate ubiquitination of SCF(FBXW7) target proteins. Interacts (via PXLXP motif) with host ZMYND11/BS69 (via MYND-type zinc finger); this interaction inhibits E1A mediated transactivation. Interacts with host EP300; this interaction stimulates the acetylation of RB1 by recruiting EP300 and RB1 into a multimeric-protein complex. Interacts with host CTBP1 and CTBP2; this interaction seems to potentiate viral replication. Interacts with host DCAF7 (ref.16). Interacts with host DYRK1A. Interacts with host KPNA4; this interaction allows E1A import into the host nucleus. Interacts with host EP400; this interaction stabilizes MYC. Interacts with host TBP protein; this interaction probably disrupts the TBP-TATA complex. Interacts (via LXCXE motif) with host TMEM173/STING; this interaction impairs the ability of TMEM173/STING to sense cytosolic DNA and promote the production of type I interferon (IFN-alpha and IFN-beta). Interacts (via C-terminus) with host ZBED1/hDREF (via C-terminus); the interaction is direct.

It localises to the host nucleus. In terms of biological role, plays a role in viral genome replication by driving entry of quiescent cells into the cell cycle. Stimulation of progression from G1 to S phase allows the virus to efficiently use the cellular DNA replicating machinery to achieve viral genome replication. E1A protein has both transforming and trans-activating activities. Induces the disassembly of the E2F1 transcription factor from RB1 by direct competition for the same binding site on RB1, with subsequent transcriptional activation of E2F1-regulated S-phase genes and of the E2 region of the adenoviral genome. Release of E2F1 leads to the ARF-mediated inhibition of MDM2 and causes TP53/p53 to accumulate because it is not targeted for degradation by MDM2-mediated ubiquitination anymore. This increase in TP53, in turn, would arrest the cell proliferation and direct its death but this effect is counteracted by the viral protein E1B-55K. Inactivation of the ability of RB1 to arrest the cell cycle is critical for cellular transformation, uncontrolled cellular growth and proliferation induced by viral infection. Interaction with RBX1 and CUL1 inhibits ubiquitination of the proteins targeted by SCF(FBXW7) ubiquitin ligase complex, and may be linked to unregulated host cell proliferation. The tumorigenesis-restraining activity of E1A may be related to the disruption of the host CtBP-CtIP complex through the CtBP binding motif. Interaction with host TMEM173/STING impairs the ability of TMEM173/STING to sense cytosolic DNA and promote the production of type I interferon (IFN-alpha and IFN-beta). Promotes the sumoylation of host ZBED1/hDREF with SUMO1. The chain is Early E1A protein from Homo sapiens (Human).